Here is a 334-residue protein sequence, read N- to C-terminus: MTPLDAKRPLQLNHLGQLRHFLSLDGLPRELLTEILDTADSFLEVGARAVKKVPLLRGKTVCNVFFENSTRTRTTFELAAQRLSADVITLNVSTSSTSKGETLFDTLRNLEAMAADMFVVRHADSGAAHFIAEHVCPDVAIINGGDGRHAHPTQGMLDMLTIRRHKGGFENLSVAIVGDILHSRVARSNMLALKALGCPDIRVIGPKTLLPVGVEQYGVKVYTDLNEGLKDVDVVIMLRLQRERMTGGLLPSEGEFYRLFGLTTARLAAAKPDAIVMHPGPINRGVEIESAVADGAHSVILNQVTYGIAIRMAVLSMAMSGQNAQRQFEQENAQ.

Positions 71 and 72 each coordinate carbamoyl phosphate. Residue lysine 99 coordinates L-aspartate. Carbamoyl phosphate-binding residues include arginine 121, histidine 151, and glutamine 154. L-aspartate-binding residues include arginine 184 and arginine 239. The carbamoyl phosphate site is built by glycine 280 and proline 281.

The protein belongs to the aspartate/ornithine carbamoyltransferase superfamily. ATCase family. In terms of assembly, heterododecamer (2C3:3R2) of six catalytic PyrB chains organized as two trimers (C3), and six regulatory PyrI chains organized as three dimers (R2).

The enzyme catalyses carbamoyl phosphate + L-aspartate = N-carbamoyl-L-aspartate + phosphate + H(+). It participates in pyrimidine metabolism; UMP biosynthesis via de novo pathway; (S)-dihydroorotate from bicarbonate: step 2/3. Functionally, catalyzes the condensation of carbamoyl phosphate and aspartate to form carbamoyl aspartate and inorganic phosphate, the committed step in the de novo pyrimidine nucleotide biosynthesis pathway. This chain is Aspartate carbamoyltransferase catalytic subunit, found in Pseudomonas syringae pv. syringae (strain B728a).